The following is a 240-amino-acid chain: UDP-2,3-diacylglucosamine hydrolase (240 aa).

Positions 8, 10, 41, 79, and 114 each coordinate Mn(2+). 79-80 lines the substrate pocket; sequence NR. Substrate is bound by residues Asp122, Ser160, Asn164, Lys167, and His195. Mn(2+) is bound by residues His195 and His197.

Belongs to the LpxH family. Mn(2+) serves as cofactor.

It localises to the cell inner membrane. It catalyses the reaction UDP-2-N,3-O-bis[(3R)-3-hydroxytetradecanoyl]-alpha-D-glucosamine + H2O = 2-N,3-O-bis[(3R)-3-hydroxytetradecanoyl]-alpha-D-glucosaminyl 1-phosphate + UMP + 2 H(+). Its pathway is glycolipid biosynthesis; lipid IV(A) biosynthesis; lipid IV(A) from (3R)-3-hydroxytetradecanoyl-[acyl-carrier-protein] and UDP-N-acetyl-alpha-D-glucosamine: step 4/6. Functionally, hydrolyzes the pyrophosphate bond of UDP-2,3-diacylglucosamine to yield 2,3-diacylglucosamine 1-phosphate (lipid X) and UMP by catalyzing the attack of water at the alpha-P atom. Involved in the biosynthesis of lipid A, a phosphorylated glycolipid that anchors the lipopolysaccharide to the outer membrane of the cell. The polypeptide is UDP-2,3-diacylglucosamine hydrolase (Salmonella typhi).